The following is a 106-amino-acid chain: Valine dehydrogenase (106 aa).

K91 is an active-site residue.

Belongs to the Glu/Leu/Phe/Val dehydrogenases family. As to quaternary structure, homodimer.

It is found in the cytoplasm. The catalysed reaction is L-valine + NAD(+) + H2O = 3-methyl-2-oxobutanoate + NH4(+) + NADH + H(+). The protein operates within amino-acid degradation; L-valine degradation. Functionally, oxidative deamination of branched-chain amino acids. The catabolism of valine is the major source of fatty acid precursors for macrolide biosynthesis and a vital source of antibiotic precursors. This is Valine dehydrogenase (vdh) from Streptomyces ambofaciens.